Reading from the N-terminus, the 441-residue chain is Sec-independent protein translocase protein TatCo (441 aa).

The interval 1–185 is disordered; it reads MADEERDAGL…LVGEAPESDQ (185 aa). Over residues 13-22 the composition is skewed to acidic residues; that stretch reads ADDETDASDD. The span at 51–62 shows a compositional bias: basic and acidic residues; the sequence is TPRDETVTHGSD. Acidic residues predominate over residues 75-104; sequence DNGDDSDSDTDAAPDDADDSATDSDADSDD. Residues 105–117 are compositionally biased toward basic and acidic residues; it reads EPRLLADDEHTSH. 2 stretches are compositionally biased toward acidic residues: residues 122–138 and 164–173; these read TYDDSSDESADDVDPDA and EDADFDDEDV. The next 6 helical transmembrane spans lie at 200 to 220, 276 to 296, 317 to 337, 357 to 377, 395 to 415, and 416 to 436; these read LAVVLGVAGAITLVLFPGADI, VAGLAGTVIGLPVFVYETYLF, LVLALVGVLFAHFVVLPAIFA, FNLILILMGYMAVVFQIPLFV, RLLFWGAFLGLAFLVSPDPTG, and MAPIIIGATMITLFEGTLAAL.

Belongs to the TatC family. In terms of assembly, forms a complex with TatA.

It localises to the cell membrane. In terms of biological role, part of the twin-arginine translocation (Tat) system that transports large folded proteins containing a characteristic twin-arginine motif in their signal peptide across membranes. The sequence is that of Sec-independent protein translocase protein TatCo from Haloferax volcanii (strain ATCC 29605 / DSM 3757 / JCM 8879 / NBRC 14742 / NCIMB 2012 / VKM B-1768 / DS2) (Halobacterium volcanii).